Reading from the N-terminus, the 212-residue chain is ATP-dependent dethiobiotin synthetase BioD (212 aa).

An ATP-binding site is contributed by 13–18 (GVGKTV). Residue Thr-17 participates in Mg(2+) binding. The active site involves Lys-33. Glu-100 contacts Mg(2+). ATP contacts are provided by residues 100 to 103 (EGAG) and 184 to 186 (PHL).

The protein belongs to the dethiobiotin synthetase family. As to quaternary structure, homodimer. It depends on Mg(2+) as a cofactor.

Its subcellular location is the cytoplasm. The catalysed reaction is (7R,8S)-7,8-diammoniononanoate + CO2 + ATP = (4R,5S)-dethiobiotin + ADP + phosphate + 3 H(+). Its pathway is cofactor biosynthesis; biotin biosynthesis; biotin from 7,8-diaminononanoate: step 1/2. Functionally, catalyzes a mechanistically unusual reaction, the ATP-dependent insertion of CO2 between the N7 and N8 nitrogen atoms of 7,8-diaminopelargonic acid (DAPA, also called 7,8-diammoniononanoate) to form a ureido ring. The sequence is that of ATP-dependent dethiobiotin synthetase BioD from Rhodopseudomonas palustris (strain BisB5).